The following is a 190-amino-acid chain: Protein GrpE (190 aa).

Residues 1 to 10 show a composition bias toward basic and acidic residues; it reads MKKHVTEEQK. A disordered region spans residues 1 to 42; the sequence is MKKHVTEEQKTSAAPEAEQASPESSAAEAATPEERISRLEEQ. A compositionally biased stretch (low complexity) spans 12 to 30; sequence SAAPEAEQASPESSAAEAA. Over residues 32-42 the composition is skewed to basic and acidic residues; the sequence is PEERISRLEEQ.

This sequence belongs to the GrpE family. Homodimer.

It is found in the cytoplasm. In terms of biological role, participates actively in the response to hyperosmotic and heat shock by preventing the aggregation of stress-denatured proteins, in association with DnaK and GrpE. It is the nucleotide exchange factor for DnaK and may function as a thermosensor. Unfolded proteins bind initially to DnaJ; upon interaction with the DnaJ-bound protein, DnaK hydrolyzes its bound ATP, resulting in the formation of a stable complex. GrpE releases ADP from DnaK; ATP binding to DnaK triggers the release of the substrate protein, thus completing the reaction cycle. Several rounds of ATP-dependent interactions between DnaJ, DnaK and GrpE are required for fully efficient folding. This is Protein GrpE from Pelobacter propionicus (strain DSM 2379 / NBRC 103807 / OttBd1).